A 743-amino-acid chain; its full sequence is Catalase-peroxidase (743 aa).

The span at 1 to 15 (MSSDSRPPQPDTSTQ) shows a compositional bias: polar residues. Positions 1 to 40 (MSSDSRPPQPDTSTQSNSESESPAISSPTPQDHAPMTNRD) are disordered. Low complexity predominate over residues 16–28 (SNSESESPAISSP). Residues 110–233 (WHAAGTYRIQ…YGATTMGLIY (124 aa)) constitute a cross-link (tryptophyl-tyrosyl-methioninium (Trp-Tyr) (with M-259)). The active-site Proton acceptor is histidine 111. The tryptophyl-tyrosyl-methioninium (Tyr-Met) (with W-110) cross-link spans 233 to 259 (YVNPEGPEGKPDPVAAAHDIRETFARM). Residue histidine 274 coordinates heme b. Positions 490–511 (DKRGGANGGRLRLEPQKSWESN) are disordered.

It belongs to the peroxidase family. Peroxidase/catalase subfamily. Homodimer or homotetramer. It depends on heme b as a cofactor. In terms of processing, formation of the three residue Trp-Tyr-Met cross-link is important for the catalase, but not the peroxidase activity of the enzyme.

It carries out the reaction H2O2 + AH2 = A + 2 H2O. The enzyme catalyses 2 H2O2 = O2 + 2 H2O. Functionally, bifunctional enzyme with both catalase and broad-spectrum peroxidase activity. The chain is Catalase-peroxidase from Mycobacterium marinum (strain ATCC BAA-535 / M).